The following is a 334-amino-acid chain: Dual specificity mitogen-activated protein kinase kinase 6 (334 aa).

Over residues 1–11 (MSQSKGKKRNP) the composition is skewed to basic residues. Residues 1 to 34 (MSQSKGKKRNPGLKIPKEAFEQPQTSSTPPRDLD) form a disordered region. The tract at residues 4–19 (SKGKKRNPGLKIPKEA) is d domain. One can recognise a Protein kinase domain in the interval 53–314 (LEPIVELGRG…YPELMQHPFF (262 aa)). Residues 59–67 (LGRGAYGVV) and Lys82 each bind ATP. Asp179 acts as the Proton acceptor in catalysis. At Ser207 the chain carries Phosphoserine; by MAPK3. Thr211 carries the post-translational modification Phosphothreonine; by MAPK3. Residues 311-334 (HPFFTLHESKATDVASFVKSILGD) form a DVD domain region.

Belongs to the protein kinase superfamily. STE Ser/Thr protein kinase family. MAP kinase kinase subfamily. In terms of assembly, dimer. Interacts (via its D domain) with its substrates MAPK11, MAPK12, MAPK13 and MAPK14. Interacts (via its DVD domain) with MAP3Ks activators like MAP3K5/ASK1, MAP3K1/MEKK1, MAP3K2/MEKK2, MAP3K3/MEKK3, MAP3K4/MEKK4, MAP3K7/TAK1, MAP3K11/MLK3 and MAP3K17/TAOK2. Interacts with DCTN1. Interacts with EIF2AK2/PKR. Weakly autophosphorylated. Phosphorylated at Ser-207 and Thr-211 by the majority of M3Ks, such as MAP3K5/ASK1, MAP3K1/MEKK1, MAP3K2/MEKK2, MAP3K3/MEKK3, MAP3K4/MEKK4, MAP3K7/TAK1, MAP3K11/MLK3 and MAP3K17/TAOK2. In terms of processing, in response to genotoxic stress, MAP3K-phosphorylated MAP2K6 is ubiquitinated and degraded by the SCF(FBXO31) complex.

The protein resides in the nucleus. The protein localises to the cytoplasm. It is found in the cytoskeleton. It catalyses the reaction L-seryl-[protein] + ATP = O-phospho-L-seryl-[protein] + ADP + H(+). The catalysed reaction is L-threonyl-[protein] + ATP = O-phospho-L-threonyl-[protein] + ADP + H(+). The enzyme catalyses L-tyrosyl-[protein] + ATP = O-phospho-L-tyrosyl-[protein] + ADP + H(+). Its activity is regulated as follows. Activated by dual phosphorylation on Ser-207 and Thr-211 in response to a variety of cellular stresses, including UV radiation, osmotic shock, hypoxia, inflammatory cytokines, interferon gamma (IFNG), and less often by growth factors. MAP2K6/MKK6 is activated by the majority of M3Ks, such as MAP3K5/ASK1, MAP3K1/MEKK1, MAP3K2/MEKK2, MAP3K3/MEKK3, MAP3K4/MEKK4, MAP3K7/TAK1, MAP3K11/MLK3 and MAP3K17/TAOK2. Its function is as follows. Dual specificity protein kinase which acts as an essential component of the MAP kinase signal transduction pathway. With MAP3K3/MKK3, catalyzes the concomitant phosphorylation of a threonine and a tyrosine residue in the MAP kinases p38 MAPK11, MAPK12, MAPK13 and MAPK14 and plays an important role in the regulation of cellular responses to cytokines and all kinds of stresses. Especially, MAP2K3/MKK3 and MAP2K6/MKK6 are both essential for the activation of MAPK11 and MAPK13 induced by environmental stress, whereas MAP2K6/MKK6 is the major MAPK11 activator in response to TNF. MAP2K6/MKK6 also phosphorylates and activates PAK6. The p38 MAP kinase signal transduction pathway leads to direct activation of transcription factors. Nuclear targets of p38 MAP kinase include the transcription factors ATF2 and ELK1. Within the p38 MAPK signal transduction pathway, MAP3K6/MKK6 mediates phosphorylation of STAT4 through MAPK14 activation, and is therefore required for STAT4 activation and STAT4-regulated gene expression in response to IL-12 stimulation. The pathway is also crucial for IL-6-induced SOCS3 expression and down-regulation of IL-6-mediated gene induction; and for IFNG-dependent gene transcription. Has a role in osteoclast differentiation through NF-kappa-B transactivation by TNFSF11, and in endochondral ossification and since SOX9 is another likely downstream target of the p38 MAPK pathway. MAP2K6/MKK6 mediates apoptotic cell death in thymocytes. Acts also as a regulator for melanocytes dendricity, through the modulation of Rho family GTPases. In Bos taurus (Bovine), this protein is Dual specificity mitogen-activated protein kinase kinase 6 (MAP2K6).